We begin with the raw amino-acid sequence, 474 residues long: Glutamate--tRNA ligase 1 (474 aa).

Positions 11 to 21 (PSPTGYLHIGG) match the 'HIGH' region motif. Residues 240–244 (KLSKR) carry the 'KMSKS' region motif. K243 lines the ATP pocket.

Belongs to the class-I aminoacyl-tRNA synthetase family. Glutamate--tRNA ligase type 1 subfamily. In terms of assembly, monomer.

It localises to the cytoplasm. The enzyme catalyses tRNA(Glu) + L-glutamate + ATP = L-glutamyl-tRNA(Glu) + AMP + diphosphate. Its function is as follows. Catalyzes the attachment of glutamate to tRNA(Glu) in a two-step reaction: glutamate is first activated by ATP to form Glu-AMP and then transferred to the acceptor end of tRNA(Glu). In Mesorhizobium japonicum (strain LMG 29417 / CECT 9101 / MAFF 303099) (Mesorhizobium loti (strain MAFF 303099)), this protein is Glutamate--tRNA ligase 1.